The primary structure comprises 552 residues: MDVEKKLFLKALKEKFEEDPKEKYTKFYIFGGWRQSARKREFVEFAQKLIEKRGGIPFYNPDIGVPLGQRKLMTYKISGTDAFVEGDDLHFCNNAAIQQLVDDIKRTVIVGMDTAHAVLEKRLGVEVTPETINEYMETINHALPGGAVVQEHMVEVHPGLVWDCYAKIFTGNDELADEIDKRFLIDINKEFPEEQAEQIKKYIGNRTYQVSRVPTIVVRCCDGGTVSRWSAMQIGMSFITAYKLCAGEAAIADFSYAAKHADVIQMGMILPARRARGPNEPGGVPFGIFADIIQTSRVSDDPAQVTLEVIGAAATFYDQVWLGSYMSGGVGFTQYASATYTDDILDDFVYYGMDYVEKKYGLCGVKPSMEVVKDIATEVTLYGLEQYDEYPALLEDHFGGSQRAGVTAAAAGCSVAFATGNSNAGINGWYLSQILHKEYHSRLGFYGYDLQDQCGAANSLSIRSDEGLLHECRGPNYPNYAMNVGHQPEYAGIAQAPHAARGDAFCLNPIIKVAFADDNLIFDFKWPRKCIAKGALREFEPAGERDLIIPAA.

Gln150 lines the coenzyme F430 pocket. Residues Arg228, 259–260, and Arg273 contribute to the coenzyme B site; that span reads KH. Tyr335 and Tyr446 together coordinate coenzyme M.

The protein belongs to the methyl-coenzyme M reductase alpha subunit family. MCR is a hexamer of two alpha, two beta, and two gamma chains, forming a dimer of heterotrimers. Coenzyme F430 is required as a cofactor.

The catalysed reaction is coenzyme B + methyl-coenzyme M = methane + coenzyme M-coenzyme B heterodisulfide. It functions in the pathway one-carbon metabolism; methyl-coenzyme M reduction; methane from methyl-coenzyme M: step 1/1. Its function is as follows. Component of the methyl-coenzyme M reductase (MCR) I that catalyzes the reductive cleavage of methyl-coenzyme M (CoM-S-CH3 or 2-(methylthio)ethanesulfonate) using coenzyme B (CoB or 7-mercaptoheptanoylthreonine phosphate) as reductant which results in the production of methane and the mixed heterodisulfide of CoB and CoM (CoM-S-S-CoB). This is the final step in methanogenesis. The protein is Methyl-coenzyme M reductase II subunit alpha (mrtA) of Methanocaldococcus jannaschii (strain ATCC 43067 / DSM 2661 / JAL-1 / JCM 10045 / NBRC 100440) (Methanococcus jannaschii).